The following is a 468-amino-acid chain: Two-component response regulator-like APRR9 (468 aa).

Positions 38–156 (RVLLVESDYS…ELKNLWQHVW (119 aa)) constitute a Response regulatory domain. 2 stretches are compositionally biased toward polar residues: residues 168-177 (HAQSLPASQH) and 194-203 (DQGSGAQAIN). 3 disordered regions span residues 168-203 (HAQS…QAIN), 302-416 (VVAL…SRSQ), and 442-468 (RKKL…STKS). Residues 315–327 (TPTESHEKLRKVT) are compositionally biased toward basic and acidic residues. Over residues 328-364 (SDQGSATTSSNQENIGSSSVSFRNQVLQSTVTNQKQD) the composition is skewed to polar residues. Basic and acidic residues-rich tracts occupy residues 371 to 382 (SNREKAASKEVE) and 400 to 409 (EKPKEEESAK). Residues 417–459 (REAALMKFRLKRKDRCFDKKVRYQSRKKLAEQRPRVKGQFVRT) enclose the CCT domain. Residues 458 to 468 (RTVNSDASTKS) are compositionally biased toward polar residues.

Belongs to the ARR-like family. Phosphorylated. Phosphorylation varies throughout the diurnal cycle.

It is found in the nucleus. Its function is as follows. Transcriptional repressor of CCA1 and LHY, and positive regulator of LWD1 and LWD2 expression. Controls photoperiodic flowering response and temperature compensation. Involved in the positive and negative feedback loops of the circadian clock. Expression of several members of the ARR-like family is controlled by circadian rhythm. Regulated at the transcriptional level by a corepressor complex consisting of ELF4, ELF3, and LUX. APRR9, APRR7, and APRR5 coordinately act on the upstream region of the target genes to repress their expression from noon until midnight. The particular coordinated sequential expression of APRR9, APRR7, APRR5, APRR3 and APPR1 result to circadian waves that may be at the basis of the endogenous circadian clock. The chain is Two-component response regulator-like APRR9 (APRR9) from Arabidopsis thaliana (Mouse-ear cress).